A 427-amino-acid chain; its full sequence is MPGMVSKNPDLEFDSLQPCFYPDEDDFYLCGPDSAPPGEDIWKKFELLPTPPLSPSRPAPGAPSGRGPGAVGRSGSVGLPHDPVDWASELLLLPPEADLWGGMDGGDFFETGPGVTNNLNSIIIQDCMWSGFSAREKLERAVTEKLQNKTPAAPPPPPGTAGSPPVPARSGRAVPECVDPAVVFPFPVNKREAPAAEGLRRRRRARGDSRASSSSSSSGDDTLSDSEDDEDEEEEDEEEEIDVVTVEKRRSSTNKSVTTLTITVRPNNTTFSSVRTQQNGLILKRCAPIHQQHNYAAPSPFVETEESPPQKKLKVEVSRPVKPTIQPKLKSSSPRNSDSEDSERRRNHNILERQRANDLRSSFLTLRDHVLSELVQNEKAAKVVILKKATEYVHSLQAEEQKLLLEKEKLQARQEQLLKKIDYKRTC.

Disordered stretches follow at residues 45–79 (FELL…SVGL), 144–173 (EKLQ…SGRA), 195–255 (AAEG…STNK), and 297–349 (APSP…RNHN). Composition is skewed to pro residues over residues 49 to 61 (PTPP…PAPG) and 152 to 167 (AAPP…PPVP). The span at 210-221 (RASSSSSSSGDD) shows a compositional bias: low complexity. Over residues 222–242 (TLSDSEDDEDEEEEDEEEEID) the composition is skewed to acidic residues. 2 positions are modified to phosphoserine; by CK2: serine 224 and serine 226. A bHLH domain is found at 343–396 (ERRRNHNILERQRANDLRSSFLTLRDHVLSELVQNEKAAKVVILKKATEYVHSL). The interval 396–417 (LQAEEQKLLLEKEKLQARQEQL) is leucine-zipper.

As to quaternary structure, efficient DNA binding requires dimerization with another bHLH protein. Binds DNA as a heterodimer with MAX.

Its subcellular location is the nucleus. This Serinus canaria (Island canary) protein is N-myc proto-oncogene protein (MYCN).